Consider the following 417-residue polypeptide: Blood group Rh(CE) polypeptide (417 aa).

The next 11 helical transmembrane spans lie at 12–32 (CLPL…YFFT), 44–64 (LVAS…GLGF), 77–97 (VAFN…LDGF), 125–145 (ISAG…MVLV), 172–192 (FYVF…KPLP), 203–223 (TIPS…WPSV), 238–258 (MFNT…GSSL), 265–285 (ISMT…GTSC), 287–307 (LIPS…ISIG), 331–351 (IFSL…VLHT), and 358–378 (MIGF…VIAL).

Belongs to the ammonium transporter (TC 2.A.49) family. Rh subfamily. As to quaternary structure, heterotrimer; a RHCE monomer interacts with a RHAG homodimer. Component of the ankyrin-1 complex in the erythrocyte, composed of ANK1, RHCE, RHAG, SLC4A1, EPB42, GYPA, GYPB and AQP1. Interacts (via the N- and C-terminal) with ANK1 (via ANk 1-5 repeats); mediates the primary membrane attachment site for ANK1. As to expression, restricted to tissues or cell lines expressing erythroid characters. Isoform 4g and isoform RhPI-Alpha are expressed in immature erythroblasts but not in mature erythroblasts.

Its subcellular location is the membrane. Its function is as follows. Component of the ankyrin-1 complex, a multiprotein complex involved in the stability and shape of the erythrocyte membrane. Mediates the primary membrane attachment site for ANK1 when associated with RHAG. May participate in the ammonium and carbon dioxide transport through the heterotrimer form. This Homo sapiens (Human) protein is Blood group Rh(CE) polypeptide.